The chain runs to 346 residues: Probable 3-hydroxyacyl-CoA dehydrogenase (346 aa).

The segment at 322 to 346 is disordered; it reads RANLSPSATPCTPWKARKATSCAPP.

The protein belongs to the 3-hydroxyacyl-CoA dehydrogenase family.

It catalyses the reaction a (3S)-3-hydroxyacyl-CoA + NAD(+) = a 3-oxoacyl-CoA + NADH + H(+). This Deinococcus radiodurans (strain ATCC 13939 / DSM 20539 / JCM 16871 / CCUG 27074 / LMG 4051 / NBRC 15346 / NCIMB 9279 / VKM B-1422 / R1) protein is Probable 3-hydroxyacyl-CoA dehydrogenase.